Consider the following 193-residue polypeptide: PBAN-type neuropeptides (193 aa).

An N-terminal signal peptide occupies residues 1–19 (MYGAVLPGLFFIFISCVVA). An Isoleucine amide modification is found at I46. A leucine amide mark is found at L102 and L122. The disordered stretch occupies residues 124-158 (RRLADDTPATPADQEMYRPDPEQIDSRTKYFSPRL). Positions 138 to 151 (EMYRPDPEQIDSRT) are enriched in basic and acidic residues. L158 and L168 each carry leucine amide. The propeptide occupies 186 to 193 (STNKTQST).

This sequence belongs to the pyrokinin family. In terms of tissue distribution, expressed in the mandibular, maxillary and labial neuromeres of the male and female brain-subesophageal ganglions, in the corpora cardiaca and all around the corpora allata, and at a lower level in the brain near the calyx and pedunculus of the mushroom body (at protein level). Expressed in larvae and adult of both sexes (at protein level). Expressed in corpora cardiaca (CC), corpora allata (CA) and gnathal ganglion (GNG) (at protein level). Expression in CC and CA detected in most animals, in GNG in some (at protein level). As to expression, expression not detected in CC, CA, AL or GNG (at protein level). In terms of tissue distribution, expressed in corpora cardiaca (CC), corpora allata (CA), antennal lobe (AL) and gnathal ganglion (GNG) (at protein level). Expression in CC, CA and GNG detected in most animals, expression in AL detected in few (at protein level). Expressed in corpora cardiaca (CC), corpora allata (CA), antennal lobe (AL) and gnathal ganglion (GNG) (at protein level). Expression in CC, CA and GNG detected in all animals, expression in AL detected in some (at protein level). As to expression, expressed in corpora cardiaca (CC), corpora allata (CA), antennal lobe (AL) and gnathal ganglion (GNG) (at protein level). Expression in CC, CA and GNG detected in most animals, expression in AL detected in some animals (at protein level).

The protein resides in the secreted. Its function is as follows. A hormone that controls sex pheromone production in female moths and pheromone responsiveness in male. The protein is PBAN-type neuropeptides of Agrotis ipsilon (Black cutworm moth).